We begin with the raw amino-acid sequence, 64 residues long: uncharacterized protein (64 aa).

This is an uncharacterized protein from Enterobacteria phage T4 (Bacteriophage T4).